The sequence spans 492 residues: Stromelysin-3 (492 aa).

Residues 1 to 35 (MARAACLLRAISRVLLLPLPLLLLLLLLLPSPLMA) form the signal peptide. Residues 36-101 (RARPPESHRH…VLNARNRQKR (66 aa)) constitute a propeptide, activation peptide. Positions 82–89 (LRCGVPDL) match the Cysteine switch motif. Zn(2+)-binding residues include Cys84, His168, and Asp170. Residues Asp175, Gly176, Gly178, and Ile180 each contribute to the Ca(2+) site. Positions 183, 196, and 219 each coordinate Zn(2+). The active site involves Glu220. Residues His223 and His229 each contribute to the Zn(2+) site. Hemopexin repeat units lie at residues 295–343 (PDVC…WQGL), 344–386 (PSPV…KLGL), 388–436 (GSPV…WRGV), and 437–484 (PSEI…FFDC). Cysteines 298 and 484 form a disulfide.

The protein belongs to the peptidase M10A family. Requires Ca(2+) as cofactor. It depends on Zn(2+) as a cofactor. The precursor is cleaved by a furin endopeptidase. As to expression, specifically expressed in the mammary gland during apoptosis.

The protein localises to the secreted. It localises to the extracellular space. It is found in the extracellular matrix. Its function is as follows. May play an important role in the progression of epithelial malignancies. The polypeptide is Stromelysin-3 (Mmp11) (Mus musculus (Mouse)).